Here is a 252-residue protein sequence, read N- to C-terminus: Thiamine thiazole synthase (252 aa).

NAD(+) contacts are provided by residues serine 35, 54–55, glycine 62, valine 126, and 152–154; these read EK and HVD. Fe cation contacts are provided by aspartate 154 and histidine 169. Residue methionine 217 participates in NAD(+) binding. Position 227 (arginine 227) interacts with glycine.

The protein belongs to the THI4 family. In terms of assembly, homooctamer; tetramer of dimers. Requires Fe(2+) as cofactor.

The catalysed reaction is hydrogen sulfide + glycine + NAD(+) = ADP-5-ethyl-4-methylthiazole-2-carboxylate + nicotinamide + 3 H2O + H(+). It participates in cofactor biosynthesis; thiamine diphosphate biosynthesis. Involved in the biosynthesis of the thiazole moiety of thiamine. Catalyzes the conversion of NAD and glycine to adenosine diphosphate 5-(2-hydroxyethyl)-4-methylthiazole-2-carboxylate (ADT), an adenylated thiazole intermediate, using free sulfide as a source of sulfur. The protein is Thiamine thiazole synthase of Pyrococcus horikoshii (strain ATCC 700860 / DSM 12428 / JCM 9974 / NBRC 100139 / OT-3).